The primary structure comprises 151 residues: Large ribosomal subunit protein uL13 (151 aa).

A disordered region spans residues 129–151; that stretch reads SNHPHQAQKPETLTINTIPGGNN.

The protein belongs to the universal ribosomal protein uL13 family. As to quaternary structure, part of the 50S ribosomal subunit.

In terms of biological role, this protein is one of the early assembly proteins of the 50S ribosomal subunit, although it is not seen to bind rRNA by itself. It is important during the early stages of 50S assembly. This chain is Large ribosomal subunit protein uL13, found in Gloeothece citriformis (strain PCC 7424) (Cyanothece sp. (strain PCC 7424)).